Reading from the N-terminus, the 461-residue chain is Aspartyl/glutamyl-tRNA(Asn/Gln) amidotransferase subunit B (461 aa).

The protein belongs to the GatB/GatE family. GatB subfamily. In terms of assembly, heterotrimer of A, B and C subunits.

The enzyme catalyses L-glutamyl-tRNA(Gln) + L-glutamine + ATP + H2O = L-glutaminyl-tRNA(Gln) + L-glutamate + ADP + phosphate + H(+). It carries out the reaction L-aspartyl-tRNA(Asn) + L-glutamine + ATP + H2O = L-asparaginyl-tRNA(Asn) + L-glutamate + ADP + phosphate + 2 H(+). Allows the formation of correctly charged Asn-tRNA(Asn) or Gln-tRNA(Gln) through the transamidation of misacylated Asp-tRNA(Asn) or Glu-tRNA(Gln) in organisms which lack either or both of asparaginyl-tRNA or glutaminyl-tRNA synthetases. The reaction takes place in the presence of glutamine and ATP through an activated phospho-Asp-tRNA(Asn) or phospho-Glu-tRNA(Gln). This chain is Aspartyl/glutamyl-tRNA(Asn/Gln) amidotransferase subunit B, found in Methanopyrus kandleri (strain AV19 / DSM 6324 / JCM 9639 / NBRC 100938).